A 513-amino-acid polypeptide reads, in one-letter code: MVVKRILPLPRPAGLAPPTEVPLDGQDLAMPKMVMHCIWFFLASSQPSLESTSLQELEQAFTLGMQLFLARFPAAGARTRHDKDTARWYLEYNDQGADLEVIQLDRPLQDDWKALDGKCDSVFAPRPVMIFDDDASIFSIKVTRLSCGSVAISTSTHHWLVDFVGYIDLMEELSHCVSIFLNDPNAQINIDEGATKFDWSRDLLAYSKQLEPESIPSATWFTERGSPPQMTRAPSSCHYASLLFTQESLEKLKRSLAEWALETAPTTATDRIVPSKDNWIATNDALHALLWAAITDARGLDLNATTQLHTPLDGRRLLSSLSSADSQSRGKYIGNVHPGHVFPLPSSVVSAKDRSGLFNLAWLIRTQYLNVTPGQMSAIIRHHNYTDAETFGPGRLPKCTSMFGNDVTISNVARIPVRQRLDFGEKLGKPYTLTVVGMVPVTLNGLTLDSADGTCFIIQAPAEWTSKEAVLQHQPRSGDNQAPGGMLVYVGMRSEEMDKLLQNSLLQEFALVL.

Residue histidine 158 is the Proton acceptor of the active site.

The protein belongs to the plant acyltransferase family.

It participates in secondary metabolite biosynthesis. Its function is as follows. Acyltransferase; part of the gene cluster that mediates the biosynthesis of the glycolipid biosurfactant ustilagic acid (UA). UA is a secreted cellobiose glycolipid that is toxic for many microorganisms and confers biocontrol activity to U.maydis. UA consists of 15,16-dihydroxypalmitic or 2,15,16-trihydroxypalmitic acid, which is O-glycosidically linked to cellobiose at its terminal hydroxyl group. In addition, the cellobiose moiety is acetylated and acylated with a short-chain hydroxy fatty acid. UA biosynthesis starts with omega-hydroxylation of palmitic acid catalyzed by the cytochrome P450 monooxygenase cyp1. Terminal hydroxylation of palmitic acid precedes subterminal hydroxylation catalyzed by the cytochrome P450 monooxygenase cyp2. Sequential glucosylation of the hydroxy fatty acid is probably catalyzed by the glycosyltransferase ugt1. The cellobiose lipid is further decorated by acetylation of the proximal glucose residue and by acylation with a short-chain beta-hydroxy fatty acid at the distal glucose residue. The acyltransferase uat1 may be a good candidate for catalyzing either acetylation or acylation of the cellobiose lipid. The fatty acid synthase fas2 may be involved in synthesis of the carbon backbone of the short-chain beta-hydroxy fatty acid esterified to the cellobiose disaccharide. The secreted UA consists of a mixture of both alpha-hydroxylated and non-hydroxylated glycolipids; therefore, alpha-hydroxylation of the long-chain fatty, catalyzed by the fatty acid hydroxylase ahd1, occurs late in UA biosynthesis and may be the last step before secretion. The protein is Acyltransferase uat1 of Mycosarcoma maydis (Corn smut fungus).